The following is a 99-amino-acid chain: NADH-ubiquinone oxidoreductase chain 2 (99 aa).

Helical transmembrane passes span 22 to 42 and 65 to 85; these read FLTF…IQII and VMIS…SIFI.

The protein belongs to the complex I subunit 2 family.

It is found in the mitochondrion inner membrane. The enzyme catalyses a ubiquinone + NADH + 5 H(+)(in) = a ubiquinol + NAD(+) + 4 H(+)(out). In terms of biological role, core subunit of the mitochondrial membrane respiratory chain NADH dehydrogenase (Complex I) that is believed to belong to the minimal assembly required for catalysis. Complex I functions in the transfer of electrons from NADH to the respiratory chain. The immediate electron acceptor for the enzyme is believed to be ubiquinone. The protein is NADH-ubiquinone oxidoreductase chain 2 (ND2) of Cyanidium caldarium (Red alga).